Reading from the N-terminus, the 358-residue chain is Methylthioribose-1-phosphate isomerase (358 aa).

Substrate is bound by residues 54-56, Arg96, and Gln205; that span reads RGA. The Proton donor role is filled by Asp246. 256–257 is a binding site for substrate; it reads NK.

It belongs to the eIF-2B alpha/beta/delta subunits family. MtnA subfamily.

The catalysed reaction is 5-(methylsulfanyl)-alpha-D-ribose 1-phosphate = 5-(methylsulfanyl)-D-ribulose 1-phosphate. It functions in the pathway amino-acid biosynthesis; L-methionine biosynthesis via salvage pathway; L-methionine from S-methyl-5-thio-alpha-D-ribose 1-phosphate: step 1/6. Its function is as follows. Catalyzes the interconversion of methylthioribose-1-phosphate (MTR-1-P) into methylthioribulose-1-phosphate (MTRu-1-P). This Pseudomonas paraeruginosa (strain DSM 24068 / PA7) (Pseudomonas aeruginosa (strain PA7)) protein is Methylthioribose-1-phosphate isomerase.